Consider the following 431-residue polypeptide: ATP-dependent protease ATPase subunit HslU (431 aa).

Residues valine 18, 60–65, aspartate 244, glutamate 309, and arginine 381 contribute to the ATP site; that span reads GVGKTE.

The protein belongs to the ClpX chaperone family. HslU subfamily. A double ring-shaped homohexamer of HslV is capped on each side by a ring-shaped HslU homohexamer. The assembly of the HslU/HslV complex is dependent on binding of ATP.

It localises to the cytoplasm. Its function is as follows. ATPase subunit of a proteasome-like degradation complex; this subunit has chaperone activity. The binding of ATP and its subsequent hydrolysis by HslU are essential for unfolding of protein substrates subsequently hydrolyzed by HslV. HslU recognizes the N-terminal part of its protein substrates and unfolds these before they are guided to HslV for hydrolysis. The polypeptide is ATP-dependent protease ATPase subunit HslU (Caulobacter sp. (strain K31)).